The primary structure comprises 691 residues: Elongation factor G (691 aa).

The region spanning 8 to 282 (EKTRNIGIMA…AVVDYLPSPV (275 aa)) is the tr-type G domain. GTP-binding positions include 17 to 24 (AHIDAGKT), 81 to 85 (DTPGH), and 135 to 138 (NKMD).

Belongs to the TRAFAC class translation factor GTPase superfamily. Classic translation factor GTPase family. EF-G/EF-2 subfamily.

Its subcellular location is the cytoplasm. Catalyzes the GTP-dependent ribosomal translocation step during translation elongation. During this step, the ribosome changes from the pre-translocational (PRE) to the post-translocational (POST) state as the newly formed A-site-bound peptidyl-tRNA and P-site-bound deacylated tRNA move to the P and E sites, respectively. Catalyzes the coordinated movement of the two tRNA molecules, the mRNA and conformational changes in the ribosome. This Caldicellulosiruptor bescii (strain ATCC BAA-1888 / DSM 6725 / KCTC 15123 / Z-1320) (Anaerocellum thermophilum) protein is Elongation factor G.